The following is a 229-amino-acid chain: Transcriptional activator protein IrlR (229 aa).

The region spanning 2 to 115 (RILIVEDEPK…ELVARVRSIL (114 aa)) is the Response regulatory domain. Aspartate 51 is modified (4-aspartylphosphate). Positions 123 to 221 (STVLRIADLE…VRGMGYVLEV (99 aa)) form a DNA-binding region, ompR/PhoB-type.

In terms of processing, phosphorylated by IrlS.

Functionally, member of the two-component regulatory system IrlR/IrlS. May be involved in invasion of eukaryotic cells and heavy-metal resistance. The polypeptide is Transcriptional activator protein IrlR (irlR) (Burkholderia pseudomallei (strain 1026b)).